The following is a 363-amino-acid chain: Spermidine/putrescine import ATP-binding protein PotA (363 aa).

An ABC transporter domain is found at 6 to 236 (VEFKNVIKKY…PINHFVADFI (231 aa)). 38-45 (GPSGCGKT) serves as a coordination point for ATP.

Belongs to the ABC transporter superfamily. Spermidine/putrescine importer (TC 3.A.1.11.1) family. The complex is composed of two ATP-binding proteins (PotA), two transmembrane proteins (PotB and PotC) and a solute-binding protein (PotD).

It localises to the cell membrane. The catalysed reaction is ATP + H2O + polyamine-[polyamine-binding protein]Side 1 = ADP + phosphate + polyamineSide 2 + [polyamine-binding protein]Side 1.. Its function is as follows. Part of the ABC transporter complex PotABCD involved in spermidine/putrescine import. Responsible for energy coupling to the transport system. The protein is Spermidine/putrescine import ATP-binding protein PotA of Latilactobacillus sakei subsp. sakei (strain 23K) (Lactobacillus sakei subsp. sakei).